The sequence spans 429 residues: MTSYRSSSASYYSGSSSKGGFGSRSLAGSNSYGGSSFGAGFSSGVGSGFSSSGGNFAMAEAASSSFGGNEKHAMQNLNDRLASYLEKVRALEATNSDLEGKIRNWYDKQSDAGIGAGSKDYSKYFEIIAELRNKIRAATIDNATVTLQIDNARLAADDFRLKFENELALRQSVEGDSNGLRRVLDELILARGDFELQIESLTEELAYLKKNHEEEMSHAKSQSAGKVSVEMDAALGVDLTSILNNMRADYEILAEKNRRDAELWFNQKSGELKKEISVGVEQVQASKSEITELKRSLQSLEIELQSQLAMKQSVEGNLNELQGFYSSQLQQIQNTIGSLEEQLLQIRSDMEHQNTEYKLLLDIKTRLEMEIQTYRRLLEGELGQVTTVANTSSVESKTESSSTSTTRTRMVKTIVEEVVDGKVVSSRVE.

Residues 1 to 16 (MTSYRSSSASYYSGSS) are compositionally biased toward low complexity. The interval 1–20 (MTSYRSSSASYYSGSSSKGG) is disordered. The tract at residues 1-69 (MTSYRSSSAS…EAASSSFGGN (69 aa)) is head. Residues 70–105 (EKHAMQNLNDRLASYLEKVRALEATNSDLEGKIRNW) are coil 1A. The 316-residue stretch at 70 to 385 (EKHAMQNLND…RLLEGELGQV (316 aa)) folds into the IF rod domain. The tract at residues 106–127 (YDKQSDAGIGAGSKDYSKYFEI) is linker 1. The tract at residues 128-219 (IAELRNKIRA…KNHEEEMSHA (92 aa)) is coil 1B. The interval 220-242 (KSQSAGKVSVEMDAALGVDLTSI) is linker 12. A coil 2 region spans residues 243–381 (LNNMRADYEI…QTYRRLLEGE (139 aa)). The interval 382–429 (LGQVTTVANTSSVESKTESSSTSTTRTRMVKTIVEEVVDGKVVSSRVE) is tail. Residues 389–408 (ANTSSVESKTESSSTSTTRT) are disordered. A compositionally biased stretch (low complexity) spans 391 to 408 (TSSVESKTESSSTSTTRT).

Belongs to the intermediate filament family. As to quaternary structure, heterotetramer of two type I and two type II keratins.

In Xenopus laevis (African clawed frog), this protein is Keratin, type I cytoskeletal 47 kDa (xk81a1).